A 339-amino-acid polypeptide reads, in one-letter code: uncharacterized protein (339 aa).

2 VOC domains span residues glutamate 2 to glutamate 127 and threonine 141 to isoleucine 276. 3 residues coordinate Fe cation: histidine 144, histidine 222, and glutamate 306.

The protein belongs to the 4HPPD family. It depends on Fe cation as a cofactor.

This is an uncharacterized protein from Synechocystis sp. (strain ATCC 27184 / PCC 6803 / Kazusa).